The following is a 179-amino-acid chain: 3-hydroxyanthranilate 3,4-dioxygenase (179 aa).

Arginine 47 serves as a coordination point for O2. Residues histidine 51, glutamate 57, and histidine 96 each coordinate Fe cation. A substrate-binding site is contributed by glutamate 57. Residues arginine 100 and glutamate 110 each contribute to the substrate site. Cysteine 125, cysteine 128, cysteine 162, and cysteine 165 together coordinate Fe cation.

Belongs to the 3-HAO family. The cofactor is Fe(2+).

It catalyses the reaction 3-hydroxyanthranilate + O2 = (2Z,4Z)-2-amino-3-carboxymuconate 6-semialdehyde. It participates in cofactor biosynthesis; NAD(+) biosynthesis; quinolinate from L-kynurenine: step 3/3. In terms of biological role, catalyzes the oxidative ring opening of 3-hydroxyanthranilate to 2-amino-3-carboxymuconate semialdehyde, which spontaneously cyclizes to quinolinate. This Bacillus cereus (strain 03BB102) protein is 3-hydroxyanthranilate 3,4-dioxygenase.